The primary structure comprises 150 residues: Ribosomal RNA large subunit methyltransferase H (150 aa).

S-adenosyl-L-methionine is bound by residues A100 and 118 to 123; that span reads LSEMTF.

The protein belongs to the RNA methyltransferase RlmH family. In terms of assembly, homodimer.

It localises to the cytoplasm. The catalysed reaction is pseudouridine(1915) in 23S rRNA + S-adenosyl-L-methionine = N(3)-methylpseudouridine(1915) in 23S rRNA + S-adenosyl-L-homocysteine + H(+). Functionally, specifically methylates the pseudouridine at position 1915 (m3Psi1915) in 23S rRNA. The sequence is that of Ribosomal RNA large subunit methyltransferase H from Helicobacter pylori (strain HPAG1).